The primary structure comprises 143 residues: NADH-quinone oxidoreductase subunit A (143 aa).

The next 3 membrane-spanning stretches (helical) occupy residues 12-32 (YIVG…FLGG), 61-81 (FYLI…LYIW), and 90-110 (WIGF…LIYA).

The protein belongs to the complex I subunit 3 family. In terms of assembly, NDH-1 is composed of 13 different subunits. Subunits NuoA, H, J, K, L, M, N constitute the membrane sector of the complex.

It localises to the cell inner membrane. The enzyme catalyses a quinone + NADH + 5 H(+)(in) = a quinol + NAD(+) + 4 H(+)(out). Functionally, NDH-1 shuttles electrons from NADH, via FMN and iron-sulfur (Fe-S) centers, to quinones in the respiratory chain. The immediate electron acceptor for the enzyme in this species is believed to be ubiquinone. Couples the redox reaction to proton translocation (for every two electrons transferred, four hydrogen ions are translocated across the cytoplasmic membrane), and thus conserves the redox energy in a proton gradient. The protein is NADH-quinone oxidoreductase subunit A of Blochmanniella floridana.